Reading from the N-terminus, the 543-residue chain is Sarafotoxin (543 aa).

The N-terminal stretch at 1–23 is a signal peptide; the sequence is MALLPRLAAGGLLLLLALAALEG. Residues 24 to 69 constitute a propeptide that is removed on maturation; the sequence is KPAPSALSQLLEKRSEDQAAAGRIIDGGDTKQAARDPSPQRNVEPL. Residues 45–65 are disordered; that stretch reads GRIIDGGDTKQAARDPSPQRN. 12 repeat units span residues 51-90, 91-130, 131-170, 171-210, 211-250, 251-290, 291-330, 331-370, 371-410, 411-450, 451-490, and 491-530. The tract at residues 51-530 is 12 X 40 AA tandem repeats; the sequence is GDTKQAARDP…LNFCHQDVIW (480 aa). Disulfide bonds link Cys-70-Cys-84 and Cys-72-Cys-80. The propeptide occupies 92–109; sequence DTKQAARDPSPQRNVEPL. Disulfide bonds link Cys-110/Cys-124 and Cys-112/Cys-120. Residues 132–149 constitute a propeptide that is removed on maturation; that stretch reads DTKQAARDPSPQRNVEPL. Disulfide bonds link Cys-150–Cys-164 and Cys-152–Cys-160. Positions 172–189 are excised as a propeptide; it reads DTKQAARDPSPQRNVEPL. 2 disulfides stabilise this stretch: Cys-190-Cys-204 and Cys-192-Cys-200. Residues 212-229 constitute a propeptide that is removed on maturation; the sequence is DTKQAARDPSPQRNVEPL. 2 cysteine pairs are disulfide-bonded: Cys-230-Cys-244 and Cys-232-Cys-240. The propeptide occupies 252-269; the sequence is DTKQAARDPSPQRNVEPL. 2 cysteine pairs are disulfide-bonded: Cys-270-Cys-284 and Cys-272-Cys-280. Residues 292–309 constitute a propeptide that is removed on maturation; the sequence is DTKQAARDPSPQRNVEPL. 2 disulfide bridges follow: Cys-310–Cys-324 and Cys-312–Cys-320. The propeptide occupies 332 to 349; that stretch reads DTKQAARDPSPQRNVEPL. 2 disulfide bridges follow: Cys-350–Cys-364 and Cys-352–Cys-360. A propeptide spanning residues 372 to 389 is cleaved from the precursor; it reads DTKQAARDPSPQRNVEPL. Disulfide bonds link Cys-390-Cys-404 and Cys-392-Cys-400. A propeptide spanning residues 412–429 is cleaved from the precursor; sequence DTKQAARDPSPQRNVEPL. 2 disulfides stabilise this stretch: Cys-430-Cys-444 and Cys-432-Cys-440. Positions 452 to 469 are excised as a propeptide; sequence DTKQAARDPSPQRNVEPL. Disulfide bonds link Cys-470-Cys-484 and Cys-472-Cys-480. The propeptide occupies 492-509; that stretch reads DTKQAARDPSPQRNVEPL. 2 cysteine pairs are disulfide-bonded: Cys-510–Cys-524 and Cys-512–Cys-520. Residues 532–543 constitute a propeptide that is removed on maturation; the sequence is NADTSANPEFLG.

The protein belongs to the endothelin/sarafotoxin family. In terms of tissue distribution, expressed by the venom gland.

Its subcellular location is the secreted. In terms of biological role, vasoconstrictor activity. These toxins cause cardiac arrest probably as a result of coronary vasospasm. Vasoconstrictor activity. Causes cardiac arrest probably as a result of coronary vasospasm. Displays high agonistic activities towards endothelin-2 receptor (EDNRB) (displays affinity in the picomolar range) and endothelin-1 receptor (EDNRA) (lower affinities). In Atractaspis engaddensis (Israeli burrowing asp), this protein is Sarafotoxin.